Consider the following 123-residue polypeptide: Large ribosomal subunit protein uL18 (123 aa).

Belongs to the universal ribosomal protein uL18 family. In terms of assembly, part of the 50S ribosomal subunit; part of the 5S rRNA/L5/L18/L25 subcomplex. Contacts the 5S and 23S rRNAs.

In terms of biological role, this is one of the proteins that bind and probably mediate the attachment of the 5S RNA into the large ribosomal subunit, where it forms part of the central protuberance. The chain is Large ribosomal subunit protein uL18 from Wolbachia sp. subsp. Brugia malayi (strain TRS).